The chain runs to 170 residues: MSLPDPAELIRQMATDLNAHLSKRGISDPRFIGIRTGGVWVAQALLKALNNPAPLGTLDVSFYRDDFSQNGLHPQVRPSDLPFEIEGQHLVLIDDVLMSGRTVRAALNELFDYGRPASVTLVCLLDLDAGELPIRPNVVGATLSLAPDERIKLSGPEPLALELQDLSTAL.

Positions 90–102 (LVLIDDVLMSGRT) match the PRPP-binding motif.

This sequence belongs to the purine/pyrimidine phosphoribosyltransferase family. PyrR subfamily.

It carries out the reaction UMP + diphosphate = 5-phospho-alpha-D-ribose 1-diphosphate + uracil. Its function is as follows. Regulates the transcription of the pyrimidine nucleotide (pyr) operon in response to exogenous pyrimidines. Also displays a weak uracil phosphoribosyltransferase activity which is not physiologically significant. This Pseudomonas savastanoi pv. phaseolicola (strain 1448A / Race 6) (Pseudomonas syringae pv. phaseolicola (strain 1448A / Race 6)) protein is Bifunctional protein PyrR.